We begin with the raw amino-acid sequence, 418 residues long: Xanthosine permease (418 aa).

At 1-9 (MSIAMRLKV) the chain is on the cytoplasmic side. The helical transmembrane segment at 10-30 (MSFLQYFIWGSWLVTLGSYMI) threads the bilayer. Topologically, residues 31 to 41 (NTLHFTGANVG) are periplasmic. Residues 42–62 (MVYSSKGIAAIIMPGIMGIIA) traverse the membrane as a helical segment. Residues 63-70 (DKWLRAER) lie on the Cytoplasmic side of the membrane. Helical transmembrane passes span 71 to 91 (AYMLCHLVCAGVLFYAASVTD) and 92 to 112 (PDMMFWVMLVNAMAFMPTIAL). Residues 113 to 136 (SNSVSYSCLAQAGLDPVTAFPPIR) lie on the Cytoplasmic side of the membrane. The chain crosses the membrane as a helical span at residues 137–157 (VFGTVGFIVAMWAVSLLHLEL). At 158–159 (SS) the chain is on the periplasmic side. A helical transmembrane segment spans residues 160–180 (LQLYIASGASLLLSAYALTLP). The Cytoplasmic segment spans residues 181–209 (KIPVAEKKATTSLASKLGLDAFVLFKNPR). A helical membrane pass occupies residues 210–230 (MAIFFLFAMMLGAVLQITNVF). Residues 231 to 254 (GNPFLHDFARNPEFADSFVVKYPS) are Periplasmic-facing. Residues 255-275 (ILLSVSQMAEVGFILTIPFFL) form a helical membrane-spanning segment. The Cytoplasmic portion of the chain corresponds to 276–277 (KR). Residues 278–298 (FGIKTVMLMSMVAWTLRFGFF) form a helical membrane-spanning segment. The Periplasmic portion of the chain corresponds to 299–306 (AYGDPSTT). Residues 307–327 (GFILLLLSMIVYGCAFDFFNI) traverse the membrane as a helical segment. Over 328–348 (SGSVFVEQEVDSSIRASAQGL) the chain is Cytoplasmic. The helical transmembrane segment at 349–369 (FMTMVNGVGAWVGSILSGMAV) threads the bilayer. Residues 370–381 (DYFSVDGVKDWQ) are Periplasmic-facing. The helical transmembrane segment at 382–402 (TIWLVFAGYALFLAVIFFFGF) threads the bilayer. Over 403 to 418 (KYNHDPEKIKHRAVTH) the chain is Cytoplasmic.

The protein belongs to the major facilitator superfamily. Nucleoside:H(+) symporter (NHS) (TC 2.A.1.10) family.

It localises to the cell inner membrane. The enzyme catalyses xanthosine(in) + H(+)(in) = xanthosine(out) + H(+)(out). Its activity is regulated as follows. Transport is abolished by the proton uncoupler 2,4-dinitrophenol. Its function is as follows. Uptake of xanthosine. Can also transport other nucleosides such as inosine, adenosine, cytidine, uridine and thymidine. Transport is driven by a proton motive force. This is Xanthosine permease from Escherichia coli (strain K12).